A 305-amino-acid chain; its full sequence is Tyrosine recombinase XerC (305 aa).

One can recognise a Core-binding (CB) domain in the interval 1-93 (MVLDGFAAHF…SWRQYCVWLV (93 aa)). One can recognise a Tyr recombinase domain in the interval 114 to 294 (RVPKALPQEW…DFDHIARLYD (181 aa)). Residues R155, K179, H246, R249, and H272 contribute to the active site. Catalysis depends on Y281, which acts as the O-(3'-phospho-DNA)-tyrosine intermediate.

This sequence belongs to the 'phage' integrase family. XerC subfamily. Forms a cyclic heterotetrameric complex composed of two molecules of XerC and two molecules of XerD.

The protein resides in the cytoplasm. Site-specific tyrosine recombinase, which acts by catalyzing the cutting and rejoining of the recombining DNA molecules. The XerC-XerD complex is essential to convert dimers of the bacterial chromosome into monomers to permit their segregation at cell division. It also contributes to the segregational stability of plasmids. This Neisseria meningitidis serogroup C / serotype 2a (strain ATCC 700532 / DSM 15464 / FAM18) protein is Tyrosine recombinase XerC.